The primary structure comprises 1859 residues: U3 small nucleolar RNA-associated protein 10 (1859 aa).

Residues 258–278 (LGAYSVLAVLSAVAPLSIELL) form a helical membrane-spanning segment. Residues 578–616 (VLPLLLIAFNDPSSHIRAAFAQLVQLVSEITKAIHENKK) form an HEAT 1 repeat. A helical transmembrane segment spans residues 1392–1412 (IVIASISAIVSIVNVLGIKTL). The HEAT 2 repeat unit spans residues 1819-1857 (LVPHIAELLEDDDEAVEIEVREGLVRVIEKVLGEPLDRY).

Belongs to the HEATR1/UTP10 family. In terms of assembly, component of the ribosomal small subunit (SSU) processome.

It is found in the nucleus. It localises to the nucleolus. Its subcellular location is the membrane. Functionally, involved in nucleolar processing of pre-18S ribosomal RNA. Involved in ribosome biosynthesis. This chain is U3 small nucleolar RNA-associated protein 10, found in Lodderomyces elongisporus (strain ATCC 11503 / CBS 2605 / JCM 1781 / NBRC 1676 / NRRL YB-4239) (Yeast).